We begin with the raw amino-acid sequence, 576 residues long: Proline--tRNA ligase (576 aa).

This sequence belongs to the class-II aminoacyl-tRNA synthetase family. ProS type 1 subfamily. As to quaternary structure, homodimer.

It is found in the cytoplasm. The enzyme catalyses tRNA(Pro) + L-proline + ATP = L-prolyl-tRNA(Pro) + AMP + diphosphate. Functionally, catalyzes the attachment of proline to tRNA(Pro) in a two-step reaction: proline is first activated by ATP to form Pro-AMP and then transferred to the acceptor end of tRNA(Pro). As ProRS can inadvertently accommodate and process non-cognate amino acids such as alanine and cysteine, to avoid such errors it has two additional distinct editing activities against alanine. One activity is designated as 'pretransfer' editing and involves the tRNA(Pro)-independent hydrolysis of activated Ala-AMP. The other activity is designated 'posttransfer' editing and involves deacylation of mischarged Ala-tRNA(Pro). The misacylated Cys-tRNA(Pro) is not edited by ProRS. This chain is Proline--tRNA ligase, found in Magnetococcus marinus (strain ATCC BAA-1437 / JCM 17883 / MC-1).